The sequence spans 291 residues: UPF0173 metal-dependent hydrolase Rmet_5695 (291 aa).

It belongs to the UPF0173 family.

The polypeptide is UPF0173 metal-dependent hydrolase Rmet_5695 (Cupriavidus metallidurans (strain ATCC 43123 / DSM 2839 / NBRC 102507 / CH34) (Ralstonia metallidurans)).